The primary structure comprises 432 residues: MKHVRIFATLLALLVISVTPAVIHSEDVYREVTASGAHNLTLAVDNPRNLGGADDAALARDVAEVLRFDMTLAGPFSVMAPPAGTSPGGIRPGEFDLDSWRNAGVDLLVKSGYTITGDSVTMEFRLYNATQGRELAAKRYTGKRSDLRRITHTFSDDIMQTMTGERGPFTGKIAFVSTESGNKEIYLMDYDGHNVQRLTKNRSINLNPDFSPNGRELAYTSYRRGNPDLFRREIFTGTEAVVSSHRGINVTGTWSPDGKQLALAMSRDGNSEIYAISRDGRDPRRLTTHQAIDVSPAWSPDGKRIAFVSDRLGKPQVFIMNADGSDVRRLTTSGAYNVSPRWSPKGDRLVYCRQEGGFQIYSIATDGTGDTRLTSEGSNEHPRWSPDGRFLTFSSTRDGGEAIYVMRSDGSGQTRVYRSKGKASHPTWSPRW.

An N-terminal signal peptide occupies residues 1-21; it reads MKHVRIFATLLALLVISVTPA.

It belongs to the TolB family. The Tol-Pal system is composed of five core proteins: the inner membrane proteins TolA, TolQ and TolR, the periplasmic protein TolB and the outer membrane protein Pal. They form a network linking the inner and outer membranes and the peptidoglycan layer.

It localises to the periplasm. In terms of biological role, part of the Tol-Pal system, which plays a role in outer membrane invagination during cell division and is important for maintaining outer membrane integrity. The chain is Tol-Pal system protein TolB from Geobacter sulfurreducens (strain ATCC 51573 / DSM 12127 / PCA).